A 568-amino-acid polypeptide reads, in one-letter code: Natural resistance-associated macrophage protein 2 (568 aa).

Residues 1 to 20 are compositionally biased toward basic and acidic residues; it reads MVLDPEEKIPDDGASGDHGD. A disordered region spans residues 1–45; that stretch reads MVLDPEEKIPDDGASGDHGDSASLGAINPAYSNSSLPHSTGDSEE. The Cytoplasmic segment spans residues 1–69; the sequence is MVLDPEEKIP…EEYSCFSFRK (69 aa). Positions 30 to 40 are enriched in polar residues; sequence AYSNSSLPHST. A helical membrane pass occupies residues 70–90; it reads LWAFTGPGFLMSIAYLDPGNI. Over 91 to 95 the chain is Extracellular; that stretch reads ESDLQ. The chain crosses the membrane as a helical span at residues 96–117; the sequence is SGAVAGFKLLWVLLLATIVGLL. Topologically, residues 118-154 are cytoplasmic; sequence LQRLAARLGVVTGLHLAEVCHRQYPKVPRIILWLMVE. A helical membrane pass occupies residues 155–175; the sequence is LAIIGSDMQEVIGSAIAINLL. At 176 to 179 the chain is on the extracellular side; that stretch reads SAGR. A helical membrane pass occupies residues 180-194; that stretch reads VPLYGGVLITIADTF. The Cytoplasmic segment spans residues 195–208; that stretch reads VFLFLDKYGLRKLE. Residues 209–229 traverse the membrane as a helical segment; it reads AFFGFLITIMALTFGYEYVTV. Residues 230 to 255 lie on the Extracellular side of the membrane; sequence KPSQSQVLRGMFVPSCSGCHTPQVEQ. A helical membrane pass occupies residues 256–276; sequence AVGIVGAVIMPHNMYLHSALV. Over 277 to 301 the chain is Cytoplasmic; sequence KSRQVNRANKQEVREANKYFFIESC. The chain crosses the membrane as a helical span at residues 302 to 322; it reads IALFVSFIINVFVVSVFAEAF. The Extracellular segment spans residues 323 to 360; sequence FEKTNEQVVEVCRNSSSPHADLFPNDNSTLAVDIYKGG. 2 N-linked (GlcNAc...) asparagine glycosylation sites follow: Asn336 and Asn349. Residues 361 to 381 traverse the membrane as a helical segment; that stretch reads VVLGCYFGPAALYIWAVGILA. Over 382–408 the chain is Cytoplasmic; the sequence is AGQSSTMTGTYSGQFVMEGFLNLKWSR. Residues 409 to 429 traverse the membrane as a helical segment; sequence FARVILTRSIAIIPTLLVAVF. Residues 430 to 440 are Extracellular-facing; sequence QDVEHLTGMND. Residues 441 to 461 traverse the membrane as a helical segment; it reads FLNVLQSLQLPFALIPILTFT. Topologically, residues 462–482 are cytoplasmic; it reads SLRPVMSEFSNGIGWRIAGGI. Residues 483-503 form a helical membrane-spanning segment; that stretch reads LVLLVCSINMYFVVVYVQELG. Residues 504–506 are Extracellular-facing; the sequence is HVA. A helical membrane pass occupies residues 507–527; sequence LYVVAAVVSVAYLGFVFYLGW. Topologically, residues 528–568 are cytoplasmic; it reads QCLIALGLSFLDCGRSYHLGLTARPEIYLLNTVDAVSLVSR. Residues 555–559 are required for early endosome targeting; sequence YLLNT. Phosphoserine occurs at positions 556, 564, and 567.

It belongs to the NRAMP family. As to quaternary structure, forms a complex with NDFIP1 and NEDD4L, in cortical neurons, in response to iron and cobalt exposure; this interaction leads to SLC11A2 ubiquitination by NEDD4L and proteasome-dependent degradation. Interacts with NDFIP1, NDFIP2 and WWP2; this interaction leads to SLC11A2 ubiquitination by WWP2 and subsequent proteasome-dependent degradation. Interacts with COX2 and TOM6 at the outer mitochondrion membrane. Interacts with ARRDC1; this interaction regulates the incorporation of SLC11A2 into extracellular vesicles through an ubiquitination-dependent mechanism. Interacts with ARRDC4; controls the incorporation of SLC11A2 into extracellular vesicles through an ubiquitination-dependent mechanism. Ubiquitinated by WWP2. Post-translationally, N-glycosylated. Ubiquitous. As to expression, expressed in proximal intestine, kidney and brain.

The protein resides in the golgi apparatus. It localises to the trans-Golgi network membrane. Its subcellular location is the early endosome membrane. The protein localises to the recycling endosome membrane. It is found in the late endosome membrane. The protein resides in the lysosome membrane. It localises to the apical cell membrane. Its subcellular location is the mitochondrion outer membrane. The protein localises to the extracellular vesicle membrane. The catalysed reaction is Fe(2+)(in) + H(+)(in) = Fe(2+)(out) + H(+)(out). It catalyses the reaction Cd(2+)(out) + H(+)(out) = Cd(2+)(in) + H(+)(in). It carries out the reaction Co(2+)(out) + H(+)(out) = Co(2+)(in) + H(+)(in). The enzyme catalyses Mn(2+)(in) + H(+)(in) = Mn(2+)(out) + H(+)(out). The catalysed reaction is Zn(2+)(out) + H(+)(out) = Zn(2+)(in) + H(+)(in). It catalyses the reaction Ni(2+)(out) + H(+)(out) = Ni(2+)(in) + H(+)(in). It carries out the reaction H(+)(in) = H(+)(out). The enzyme catalyses Fe(2+)(in) = Fe(2+)(out). With respect to regulation, inhibited by 2-(3-carbamimidoylsulfanylmethyl-benzyl)-isothiourea. Its function is as follows. Proton-coupled metal ion symporter operating with a proton to metal ion stoichiometry of 1:1. Selectively transports various divalent metal cations, in decreasing affinity: Cd(2+) &gt; Fe(2+) &gt; Co(2+), Mn(2+) &gt;&gt; Zn(2+), Ni(2+), VO(2+). Essential for maintenance of iron homeostasis by modulating intestinal absorption of dietary Fe(2+) and TF-associated endosomal Fe(2+) transport in erythroid precursors and other cells. Enables Fe(2+) and Mn(2+) ion entry into mitochondria, and is thus expected to promote mitochondrial heme synthesis, iron-sulfur cluster biogenesis and antioxidant defense. Can mediate uncoupled fluxes of either protons or metal ions. The polypeptide is Natural resistance-associated macrophage protein 2 (Slc11a2) (Rattus norvegicus (Rat)).